The following is a 91-amino-acid chain: Auxin-responsive protein SAUR20 (91 aa).

The protein belongs to the ARG7 family.

The protein localises to the cell membrane. Its function is as follows. Functions as a positive effector of cell expansion through modulation of auxin transport. The sequence is that of Auxin-responsive protein SAUR20 from Arabidopsis thaliana (Mouse-ear cress).